The primary structure comprises 543 residues: Zinc finger CCCH-type with G patch domain-containing protein (543 aa).

Disordered stretches follow at residues 55 to 79 (AATSDDDDAPDTAGRAPPATADNPI) and 95 to 132 (TEDSAAGEQAGEQTATEPERQPNDDDADNDDDADDKLD). The span at 65-76 (DTAGRAPPATAD) shows a compositional bias: low complexity. Residues 118–131 (DDDADNDDDADDKL) are compositionally biased toward acidic residues. The C3H1-type zinc finger occupies 186–209 (PCAYFLEGECRFTDEKCRYSHGEV). Residues 272 to 304 (PFEDLLPLDEDEDGQEAAEDSESDTDGADEEEA) form a disordered region. A compositionally biased stretch (acidic residues) spans 277–304 (LPLDEDEDGQEAAEDSESDTDGADEEEA). The G-patch domain occupies 335-381 (TRGIGSKIMQKMGYIVGTGLGREGEGIVVPVSAQVLPQGRSLDYCME). The segment at 438–460 (GAAGGESSRPNRNRPGALSRQEL) is disordered.

Its subcellular location is the nucleus. Functionally, transcription repressor. This is Zinc finger CCCH-type with G patch domain-containing protein from Anopheles gambiae (African malaria mosquito).